Consider the following 401-residue polypeptide: Argininosuccinate synthase (401 aa).

8 to 16 (AYSGGLDTS) contacts ATP. L-citrulline is bound at residue Tyr87. Gly117 serves as a coordination point for ATP. The L-aspartate site is built by Thr119, Asn123, and Asp124. Asn123 is a binding site for L-citrulline. Arg127, Ser175, Glu259, and Tyr271 together coordinate L-citrulline.

It belongs to the argininosuccinate synthase family. Type 1 subfamily. In terms of assembly, homotetramer.

Its subcellular location is the cytoplasm. It catalyses the reaction L-citrulline + L-aspartate + ATP = 2-(N(omega)-L-arginino)succinate + AMP + diphosphate + H(+). The protein operates within amino-acid biosynthesis; L-arginine biosynthesis; L-arginine from L-ornithine and carbamoyl phosphate: step 2/3. In Paenarthrobacter aurescens (strain TC1), this protein is Argininosuccinate synthase.